The sequence spans 244 residues: Osmotin-like protein OSM34 (244 aa).

The signal sequence occupies residues 1–22; that stretch reads MANLLVSTFIFSALLLISTATA. 8 disulfides stabilise this stretch: C31–C222, C72–C82, C87–C93, C138–C212, C143–C195, C151–C161, C165–C174, and C175–C182.

The protein belongs to the thaumatin family.

This Arabidopsis thaliana (Mouse-ear cress) protein is Osmotin-like protein OSM34 (OSM34).